We begin with the raw amino-acid sequence, 217 residues long: Probable cutinase 3 (217 aa).

Residues 1 to 17 (MSLRSLFVAGLATLALA) form the signal peptide. Cystine bridges form between C39–C118 and C65–C79. S129 serves as the catalytic Nucleophile. Cysteines 180 and 187 form a disulfide. D184 is a catalytic residue. H197 serves as the catalytic Proton donor/acceptor.

The protein belongs to the cutinase family.

The protein resides in the secreted. It carries out the reaction cutin + H2O = cutin monomers.. Its function is as follows. Catalyzes the hydrolysis of complex carboxylic polyesters found in the cell wall of plants. Degrades cutin, a macromolecule that forms the structure of the plant cuticle. The polypeptide is Probable cutinase 3 (Neosartorya fischeri (strain ATCC 1020 / DSM 3700 / CBS 544.65 / FGSC A1164 / JCM 1740 / NRRL 181 / WB 181) (Aspergillus fischerianus)).